We begin with the raw amino-acid sequence, 459 residues long: Sorting nexin-8 (459 aa).

Residues 1–37 form a disordered region; it reads MTGRAMDPLPSPAVAAAAEAEADEEADPPATGPRTSQ. Residues 68-176 enclose the PX domain; sequence AKDTVQVELI…KLFLSFSGSD (109 aa). A 1,2-diacyl-sn-glycero-3-phospho-(1D-myo-inositol-3-phosphate) is bound by residues Arg-104, Lys-130, and Arg-143. Residue Thr-446 is modified to Phosphothreonine. The residue at position 450 (Ser-450) is a Phosphoserine.

The protein belongs to the sorting nexin family.

The protein localises to the early endosome membrane. In terms of biological role, may be involved in several stages of intracellular trafficking. May play a role in intracellular protein transport from early endosomes to the trans-Golgi network. This Mus musculus (Mouse) protein is Sorting nexin-8 (Snx8).